Reading from the N-terminus, the 827-residue chain is Lon protease (827 aa).

The tract at residues 1 to 27 is disordered; that stretch reads MNDETLREQTTAESEETSPTTPSPEPE. In terms of domain architecture, Lon N-terminal spans 32 to 225; it reads LPLIPLEGAV…KVLMFYRKQF (194 aa). 385 to 392 contributes to the ATP binding site; it reads GPPGVGKT. The region spanning 625-806 is the Lon proteolytic domain; that stretch reads IDQPGVAIGL…DEVLSIALLP (182 aa). Active-site residues include Ser712 and Lys755.

It belongs to the peptidase S16 family. As to quaternary structure, homohexamer. Organized in a ring with a central cavity.

It localises to the cytoplasm. The catalysed reaction is Hydrolysis of proteins in presence of ATP.. Its function is as follows. ATP-dependent serine protease that mediates the selective degradation of mutant and abnormal proteins as well as certain short-lived regulatory proteins. Required for cellular homeostasis and for survival from DNA damage and developmental changes induced by stress. Degrades polypeptides processively to yield small peptide fragments that are 5 to 10 amino acids long. Binds to DNA in a double-stranded, site-specific manner. The protein is Lon protease of Chloroflexus aurantiacus (strain ATCC 29366 / DSM 635 / J-10-fl).